A 249-amino-acid polypeptide reads, in one-letter code: Small ribosomal subunit protein uS4m (249 aa).

An S4 RNA-binding domain is found at 133-193 (RRLDIIIYRA…PEIVNLLRNQ (61 aa)).

It belongs to the universal ribosomal protein uS4 family.

The protein localises to the mitochondrion. This is Small ribosomal subunit protein uS4m (RPS4) from Reclinomonas americana.